Here is an 836-residue protein sequence, read N- to C-terminus: Lon protease (836 aa).

The region spanning 41–233 (LPVLPLRNTV…RLIHFLNREV (193 aa)) is the Lon N-terminal domain. Residue 385–392 (GPPGVGKT) coordinates ATP. Residues 627-811 (VMLSGVAVGL…DDLIDYVLEP (185 aa)) enclose the Lon proteolytic domain. Active-site residues include S714 and K757. Positions 816–836 (APQFKVEDKDHTPETTGNESE) are disordered.

The protein belongs to the peptidase S16 family. In terms of assembly, homohexamer. Organized in a ring with a central cavity.

The protein localises to the cytoplasm. The enzyme catalyses Hydrolysis of proteins in presence of ATP.. ATP-dependent serine protease that mediates the selective degradation of mutant and abnormal proteins as well as certain short-lived regulatory proteins. Required for cellular homeostasis and for survival from DNA damage and developmental changes induced by stress. Degrades polypeptides processively to yield small peptide fragments that are 5 to 10 amino acids long. Binds to DNA in a double-stranded, site-specific manner. This chain is Lon protease, found in Chloroherpeton thalassium (strain ATCC 35110 / GB-78).